The following is a 104-amino-acid chain: Large ribosomal subunit protein uL24 (104 aa).

It belongs to the universal ribosomal protein uL24 family. Part of the 50S ribosomal subunit.

One of two assembly initiator proteins, it binds directly to the 5'-end of the 23S rRNA, where it nucleates assembly of the 50S subunit. Functionally, one of the proteins that surrounds the polypeptide exit tunnel on the outside of the subunit. The sequence is that of Large ribosomal subunit protein uL24 from Shewanella sp. (strain W3-18-1).